The chain runs to 105 residues: Nucleoid-associated protein SE_2306 (105 aa).

A disordered region spans residues 1 to 40 (MRGGGNMQQMMKQMQKMQKKMAQEQEKLKEERVAGTAGGG). The segment covering 7-16 (MQQMMKQMQK) has biased composition (low complexity). Over residues 21 to 33 (MAQEQEKLKEERV) the composition is skewed to basic and acidic residues.

This sequence belongs to the YbaB/EbfC family. As to quaternary structure, homodimer.

It localises to the cytoplasm. It is found in the nucleoid. In terms of biological role, binds to DNA and alters its conformation. May be involved in regulation of gene expression, nucleoid organization and DNA protection. The protein is Nucleoid-associated protein SE_2306 of Staphylococcus epidermidis (strain ATCC 12228 / FDA PCI 1200).